A 596-amino-acid polypeptide reads, in one-letter code: Pescadillo homolog (596 aa).

The BRCT domain maps to 347–440; that stretch reads PTSTLFSEFV…ELVPANLYLP (94 aa). A disordered region spans residues 449–552; the sequence is SPWGDSVGYD…EEKDLKLIMM (104 aa). Residues 460-596 are a coiled coil; sequence AAELAEEEAE…TKAKLKKLEN (137 aa). Residues 463–500 show a composition bias toward acidic residues; it reads LAEEEAESEEEEEVSDEAEGDEEATLAAEEDEEDEAEA. Residues 501–510 show a composition bias toward basic and acidic residues; it reads EELRAQKELE. Over residues 519–529 the composition is skewed to low complexity; the sequence is SEAADSAAPSK.

It belongs to the pescadillo family. Component of the NOP7 complex, composed of ERB1, NOP7 and YTM1. The complex is held together by ERB1, which interacts with NOP7 via its N-terminal domain and with YTM1 via a high-affinity interaction between the seven-bladed beta-propeller domains of the 2 proteins. The NOP7 complex associates with the 66S pre-ribosome.

The protein localises to the nucleus. Its subcellular location is the nucleolus. The protein resides in the nucleoplasm. Its function is as follows. Component of the NOP7 complex, which is required for maturation of the 25S and 5.8S ribosomal RNAs and formation of the 60S ribosome. This is Pescadillo homolog from Eremothecium gossypii (strain ATCC 10895 / CBS 109.51 / FGSC 9923 / NRRL Y-1056) (Yeast).